The chain runs to 298 residues: Mitochondrial dicarboxylate/tricarboxylate transporter DTC (298 aa).

3 Solcar repeats span residues 12–93 (WTTV…LTAK), 103–194 (LPLY…SAEY), and 202–292 (GEMS…ITKF). The next 6 helical transmembrane spans lie at 18–38 (FVNG…IDMI), 68–88 (GLSA…GSFK), 109–129 (ALCG…ADLA), 169–189 (GCGP…ASYD), 208–228 (VGAS…FDFV), and 268–288 (FPVY…FLNQ).

The protein belongs to the mitochondrial carrier (TC 2.A.29) family. In terms of tissue distribution, highly expressed in flower buds and at lower levels in roots, leaves and stems.

The protein resides in the mitochondrion inner membrane. Its function is as follows. Catalyzes the transport of dicarboxylates, such as oxoglutarate, oxaloacetate, malate, and succinate, and of tricarboxylates, such as citrate, isocitrate, cis-aconitate, and trans-aconitate by a counter-exchange mechanism across the inner mitochondrial membrane. Substrate preference in reconstituted proteoliposomes is oxaloacetate &gt; malonate &gt; malate &gt; maleate &gt; succinate &gt; oxoglutarate &gt; citrate &gt; trans-aconitate &gt; cis-aconitate &gt; sulfate &gt; isocitrate. May be important for plant metabolic functions requiring organic acid flux to or from the mitochondria, such as nitrogen assimilation, export of reducing equivalents from the mitochondria, and fatty acid elongation. In Arabidopsis thaliana (Mouse-ear cress), this protein is Mitochondrial dicarboxylate/tricarboxylate transporter DTC (DTC).